A 32-amino-acid polypeptide reads, in one-letter code: Ferredoxin (32 aa).

One can recognise a 2Fe-2S ferredoxin-type domain in the interval 3 to 32 (YKVRLLSEAEGIDVTIDCADDVYILDAAEE).

This sequence belongs to the 2Fe2S plant-type ferredoxin family. The cofactor is [2Fe-2S] cluster.

It is found in the plastid. It localises to the chloroplast. Ferredoxins are iron-sulfur proteins that transfer electrons in a wide variety of metabolic reactions. The chain is Ferredoxin from Porphyridium purpureum (Red alga).